Consider the following 139-residue polypeptide: Large ribosomal subunit protein uL16 (139 aa).

Belongs to the universal ribosomal protein uL16 family. As to quaternary structure, part of the 50S ribosomal subunit.

Its function is as follows. Binds 23S rRNA and is also seen to make contacts with the A and possibly P site tRNAs. The polypeptide is Large ribosomal subunit protein uL16 (Chlorobium luteolum (strain DSM 273 / BCRC 81028 / 2530) (Pelodictyon luteolum)).